Reading from the N-terminus, the 247-residue chain is Small ribosomal subunit protein uS2 (247 aa).

This sequence belongs to the universal ribosomal protein uS2 family.

The sequence is that of Small ribosomal subunit protein uS2 from Pseudomonas savastanoi pv. phaseolicola (strain 1448A / Race 6) (Pseudomonas syringae pv. phaseolicola (strain 1448A / Race 6)).